Here is a 173-residue protein sequence, read N- to C-terminus: Calcium-binding protein 5 (173 aa).

4 EF-hand domains span residues 28-63 (DEIE…MGYM), 82-99 (GRVD…KLLA), 105-140 (IGVQ…LLGE), and 142-173 (LTPR…MMSR). The Ca(2+) site is built by D41, D43, D45, and D52. Ca(2+) contacts are provided by D118, N120, D122, E124, E129, D155, N157, D159, T161, and E166.

As to quaternary structure, interacts with CACNA1C (via C-terminal CDB motif) in a calcium-dependent manner. Interacts with STXBP1. Interacts with MYO6. In terms of tissue distribution, retina.

It localises to the cytoplasm. Inhibits calcium-dependent inactivation of L-type calcium channel and shifts voltage dependence of activation to more depolarized membrane potentials. Involved in the transmission of light signals. May positively regulate neurotransmitter vesicle endocytosis and exocytosis in a salt-dependent manner. May play a role in the extension and network organization of neurites. This is Calcium-binding protein 5 (CABP5) from Homo sapiens (Human).